The primary structure comprises 736 residues: Oxysterol-binding protein-related protein 9 (736 aa).

Residue alanine 2 is modified to N-acetylalanine. The PH domain occupies 2–99 (ASIMEGPLSK…WIHALEETIL (98 aa)). The segment at 231–367 (KSEQRPSSLP…DRDDDAEAGS (137 aa)) is disordered. Residues 253-290 (TPTPNSTGSGHSPPSSSLTSPSHVNLSPNTVPEFSYSS) show a composition bias toward low complexity. Residues serine 306, serine 324, serine 325, serine 326, and serine 329 each carry the phosphoserine modification. Polar residues-rich tracts occupy residues 314 to 329 (SSGS…SGNS) and 336 to 347 (TESLNSSLSNGT). Phosphoserine is present on serine 611.

The protein belongs to the OSBP family. In terms of assembly, heterodimer with OSBPL11. Interacts with OSBPL10. In terms of tissue distribution, widely expressed.

It is found in the late endosome membrane. The protein localises to the golgi apparatus. The protein resides in the trans-Golgi network membrane. The catalysed reaction is a 1,2-diacyl-sn-glycero-3-phospho-(1D-myo-inositol 4-phosphate)(out) + a 1,2-diacyl-sn-glycero-3-phospho-L-serine(in) = a 1,2-diacyl-sn-glycero-3-phospho-(1D-myo-inositol 4-phosphate)(in) + a 1,2-diacyl-sn-glycero-3-phospho-L-serine(out). Its function is as follows. Interacts with OSBPL11 to function as lipid transfer proteins. Together they form a heterodimer that localizes at the ER-trans-Golgi membrane contact sites, and exchanges phosphatidylserine (1,2-diacyl-sn-glycero-3-phospho-L-serine, PS) for phosphatidylinositol-4-phosphate (1,2-diacyl-sn-glycero-3-phospho-(1D-myo-inositol 4-phosphate), PI(4)P) between the two organelles, a step that is critical for sphingomyelin synthesis in the Golgi complex. This chain is Oxysterol-binding protein-related protein 9 (OSBPL9), found in Homo sapiens (Human).